Here is a 266-residue protein sequence, read N- to C-terminus: Probable carboxylesterase Os04g0669500 (266 aa).

Active-site charge relay system residues include Ser154, Asp208, and His240.

Belongs to the AB hydrolase superfamily. AB hydrolase 2 family.

In terms of biological role, possesses carboxylesterase activity in vitro. The chain is Probable carboxylesterase Os04g0669500 from Oryza sativa subsp. japonica (Rice).